A 72-amino-acid chain; its full sequence is Translation initiation factor IF-1 (72 aa).

The S1-like domain maps to 1–72 (MAKSDVIEME…SKGRIVYRAR (72 aa)).

Belongs to the IF-1 family. Component of the 30S ribosomal translation pre-initiation complex which assembles on the 30S ribosome in the order IF-2 and IF-3, IF-1 and N-formylmethionyl-tRNA(fMet); mRNA recruitment can occur at any time during PIC assembly.

It is found in the cytoplasm. One of the essential components for the initiation of protein synthesis. Stabilizes the binding of IF-2 and IF-3 on the 30S subunit to which N-formylmethionyl-tRNA(fMet) subsequently binds. Helps modulate mRNA selection, yielding the 30S pre-initiation complex (PIC). Upon addition of the 50S ribosomal subunit IF-1, IF-2 and IF-3 are released leaving the mature 70S translation initiation complex. The polypeptide is Translation initiation factor IF-1 (Marinobacter nauticus (strain ATCC 700491 / DSM 11845 / VT8) (Marinobacter aquaeolei)).